A 112-amino-acid chain; its full sequence is Protein AV2 (112 aa).

This sequence belongs to the geminiviridae protein AV2/V2 family. Interacts with host SGS3.

The protein resides in the host cytoplasm. Its subcellular location is the host perinuclear region. Its function is as follows. Through its interaction with host SGS3, acts as a suppressor of RNA-mediated gene silencing, also known as post-transcriptional gene silencing (PTGS), a mechanism of plant viral defense that limits the accumulation of viral RNAs. The chain is Protein AV2 from Indian cassava mosaic virus (ICMV).